The sequence spans 529 residues: Beta-hexosaminidase subunit alpha (529 aa).

An N-terminal signal peptide occupies residues 1 to 22 (MTSSRLWFSLLLAAAFAGRATA). Residues 23 to 88 (LWPWPQNFQT…PRPYLTGKRH (66 aa)) constitute a propeptide that is removed on maturation. Cys-58 and Cys-104 are disulfide-bonded. Asn-115, Asn-157, and Asn-295 each carry an N-linked (GlcNAc...) asparagine glycan. Cys-277 and Cys-328 form a disulfide bridge. Glu-323 serves as the catalytic Proton donor. The segment at 423 to 424 (NR) is critical for hydrolysis GM2 gangliosides. A disulfide bridge links Cys-505 with Cys-522.

The protein belongs to the glycosyl hydrolase 20 family. As to quaternary structure, there are 3 beta-hexosaminidase isozymes: isozyme A (hexosaminidase A) is a heterodimer composed of one subunit alpha and one subunit beta (chain A and B); isozyme B (hexosaminidase B) is a homodimer of two beta subunits (two chains A and B); isozyme S (hexosaminidase S) is a homodimer of two alpha subunits. The composition of the dimer (isozyme A versus isozyme S) has a significant effect on the substrate specificity of the alpha subunit active site. Post-translationally, N-linked glycan at Asn-115 consists of Man(3)-GlcNAc(2). N-linked glycan at Asn-157 consists of either GlcNAc or GlcNAc(2)-Man(7-9). N-linked glycan at Asn-295 consists of either GlcNAc, GlcNAc-Fuc, or GlcNAc(2)-Man(4).

The protein localises to the lysosome. The catalysed reaction is Hydrolysis of terminal non-reducing N-acetyl-D-hexosamine residues in N-acetyl-beta-D-hexosaminides.. It carries out the reaction N-acetyl-beta-D-galactosaminyl-(1-&gt;4)-beta-D-3-sulfogalactosyl-(1-&gt;4)-beta-D-glucosyl-(1&lt;-&gt;1')-ceramide + H2O = a beta-D-3-sulfogalactosyl-(1-&gt;4)-beta-D-glucosyl-(1&lt;-&gt;1')-ceramide + N-acetyl-beta-D-galactosamine. It catalyses the reaction a ganglioside GM2 (d18:1(4E)) + H2O = a ganglioside GM3 (d18:1(4E)) + N-acetyl-beta-D-galactosamine. The enzyme catalyses a ganglioside GM2 + H2O = a ganglioside GM3 + N-acetyl-beta-D-galactosamine. The catalysed reaction is beta-D-GalNAc-(1-&gt;4)-alpha-L-IdoA-(1-&gt;3)-beta-D-GalNAc-4-sulfate-(1-&gt;4)-alpha-L-IdoA-(1-&gt;3)-D-GalNAc-4-sulfate + H2O = alpha-L-IdoA-(1-&gt;3)-beta-D-GalNAc-4-sulfate-(1-&gt;4)-alpha-L-IdoA-(1-&gt;3)-D-GalNAc-4-sulfate + N-acetyl-D-galactosamine. It carries out the reaction N-acetyl-beta-D-6-sulfogalactosaminyl-(1-&gt;4)-alpha-L-iduronyl-(1-&gt;3)-N-acetyl-D-6-sulfogalactosamine + H2O = alpha-L-iduronyl-(1-&gt;3)-N-acetyl-D-6-sulfogalactosamine + N-acetyl-D-6-sulfogalactosamine. With respect to regulation, addition of GM2A stimulates the hydrolysis of sulfated glycosphingolipid SM2 and the ganglioside GM2. In terms of biological role, hydrolyzes the non-reducing end N-acetyl-D-hexosamine and/or sulfated N-acetyl-D-hexosamine of glycoconjugates, such as the oligosaccharide moieties from proteins and neutral glycolipids, or from certain mucopolysaccharides. The isozyme S is as active as the isozyme A on the anionic bis-sulfated glycans, the chondroitin-6-sulfate trisaccharide (C6S-3), and the dermatan sulfate pentasaccharide, and the sulfated glycosphingolipid SM2. The isozyme B does not hydrolyze each of these substrates, however hydrolyzes efficiently neutral oligosaccharide. Only the isozyme A is responsible for the degradation of GM2 gangliosides in the presence of GM2A. This chain is Beta-hexosaminidase subunit alpha, found in Homo sapiens (Human).